The sequence spans 439 residues: Exosome complex component RRP45 (439 aa).

The tract at residues 1–268 (MKETPLSNCE…AEITELILKA (268 aa)) is ARE binding. S65 bears the Phosphoserine mark. K297 is modified (N6-acetyllysine; alternate). K297 is covalently cross-linked (Glycyl lysine isopeptide (Lys-Gly) (interchain with G-Cter in SUMO1); alternate). K297 is covalently cross-linked (Glycyl lysine isopeptide (Lys-Gly) (interchain with G-Cter in SUMO2); alternate). Phosphoserine is present on residues S306, V325, S327, and S346. Disordered stretches follow at residues 335 to 363 (GTAQ…GGGD) and 391 to 439 (LSDS…RAAN). The segment covering 349 to 361 (DLEDSEKEDDEGG) has biased composition (acidic residues). S392, S394, K409, and I411 each carry phosphoserine. Residue K419 forms a Glycyl lysine isopeptide (Lys-Gly) (interchain with G-Cter in SUMO2) linkage. Residues 425–439 (SKKPVKRRKKKRAAN) show a composition bias toward basic residues.

Belongs to the RNase PH family. Component of the RNA exosome core complex (Exo-9), composed of EXOSC1, EXOSC2, EXOSC3, EXOSC4, EXOSC5, EXOSC6, EXOSC7, EXOSC8 and EXOSC9; within the complex interacts with EXOSC3, EXOSC4, EXOSC5 and DIS3. The catalytically inactive RNA exosome core complex (Exo-9) associates with the catalytic subunit EXOSC10/RRP6. Exo-9 may associate with DIS3 to form the nucleolar exosome complex, or DIS3L to form the cytoplasmic exosome complex. Exo-9 is formed by a hexameric base ring consisting of the heterodimers EXOSC4-EXOSC9, EXOSC5-EXOSC8 and EXOSC6-EXOSC7, and a cap ring consisting of EXOSC1, EXOSC2 and EXOSC3. The RNA exosome complex associates with cofactors C1D/RRP47, MPHOSPH6/MPP6 and MTREX/MTR4. Interacts (via C-terminus region) with SETX (via N-terminus domain); the interaction enhances SETX sumoylation. Interacts with DIS3; the interaction is direct.

It localises to the cytoplasm. The protein resides in the nucleus. The protein localises to the nucleolus. It is found in the nucleoplasm. Non-catalytic component of the RNA exosome complex which has 3'-&gt;5' exoribonuclease activity and participates in a multitude of cellular RNA processing and degradation events. In the nucleus, the RNA exosome complex is involved in proper maturation of stable RNA species such as rRNA, snRNA and snoRNA, in the elimination of RNA processing by-products and non-coding 'pervasive' transcripts, such as antisense RNA species and promoter-upstream transcripts (PROMPTs), and of mRNAs with processing defects, thereby limiting or excluding their export to the cytoplasm. The RNA exosome may be involved in Ig class switch recombination (CSR) and/or Ig variable region somatic hypermutation (SHM) by targeting AICDA deamination activity to transcribed dsDNA substrates. In the cytoplasm, the RNA exosome complex is involved in general mRNA turnover and specifically degrades inherently unstable mRNAs containing AU-rich elements (AREs) within their 3' untranslated regions, and in RNA surveillance pathways, preventing translation of aberrant mRNAs. It seems to be involved in degradation of histone mRNA. The catalytic inactive RNA exosome core complex of 9 subunits (Exo-9) is proposed to play a pivotal role in the binding and presentation of RNA for ribonucleolysis, and to serve as a scaffold for the association with catalytic subunits and accessory proteins or complexes. EXOSC9 binds to ARE-containing RNAs. In Homo sapiens (Human), this protein is Exosome complex component RRP45 (EXOSC9).